The sequence spans 336 residues: Probable deoxyhypusine synthase (336 aa).

The active-site Nucleophile is Lys308.

The protein belongs to the deoxyhypusine synthase family. The cofactor is NAD(+).

The catalysed reaction is [eIF5A protein]-L-lysine + spermidine = [eIF5A protein]-deoxyhypusine + propane-1,3-diamine. It participates in protein modification; eIF5A hypusination. Catalyzes the NAD-dependent oxidative cleavage of spermidine and the subsequent transfer of the butylamine moiety of spermidine to the epsilon-amino group of a specific lysine residue of the eIF-5A precursor protein to form the intermediate deoxyhypusine residue. The polypeptide is Probable deoxyhypusine synthase (Pyrococcus furiosus (strain ATCC 43587 / DSM 3638 / JCM 8422 / Vc1)).